A 607-amino-acid polypeptide reads, in one-letter code: Serine/threonine-protein kinase sid2 (607 aa).

Phosphoserine occurs at positions 56, 60, 65, and 86. Residues 93 to 108 (DRSGELSYKDNNHWSD) show a composition bias toward basic and acidic residues. Residues 93-118 (DRSGELSYKDNNHWSDRSSTGSPRWE) are disordered. A compositionally biased stretch (polar residues) spans 109–118 (RSSTGSPRWE). The region spanning 208–508 (FQTITQVGQG…LKQVMQHPYF (301 aa)) is the Protein kinase domain. Residues 214 to 222 (VGQGGYGSV) and lysine 237 each bind ATP. Phosphotyrosine is present on tyrosine 219. Aspartate 331 serves as the catalytic Proton acceptor. Residue serine 402 is modified to Phosphoserine. Residues 509–589 (SKIDWKNVRT…RHQKNSHPTS (81 aa)) enclose the AGC-kinase C-terminal domain. Residues 586–607 (HPTSSSSALSSPLSAPSFGTLL) are disordered. A compositionally biased stretch (low complexity) spans 589–607 (SSSSALSSPLSAPSFGTLL).

It belongs to the protein kinase superfamily. Ser/Thr protein kinase family. In terms of assembly, interacts with mob1 and cdc11.

The protein localises to the cytoplasm. Its subcellular location is the cytoskeleton. It is found in the microtubule organizing center. The protein resides in the spindle pole body. It catalyses the reaction L-seryl-[protein] + ATP = O-phospho-L-seryl-[protein] + ADP + H(+). It carries out the reaction L-threonyl-[protein] + ATP = O-phospho-L-threonyl-[protein] + ADP + H(+). Part of a signaling pathway. Required for initiation of medial ring constriction and septation. In Schizosaccharomyces pombe (strain 972 / ATCC 24843) (Fission yeast), this protein is Serine/threonine-protein kinase sid2 (sid2).